The sequence spans 172 residues: Phosphopantetheine adenylyltransferase (172 aa).

Thr13 serves as a coordination point for substrate. ATP is bound by residues 13–14 and His21; that span reads TF. Substrate-binding residues include Lys45, Leu81, and Arg95. Residues 96–98, Glu106, and 131–137 each bind ATP; these read GLR and SQFISSR.

Belongs to the bacterial CoaD family. As to quaternary structure, homohexamer. It depends on Mg(2+) as a cofactor.

It is found in the cytoplasm. The enzyme catalyses (R)-4'-phosphopantetheine + ATP + H(+) = 3'-dephospho-CoA + diphosphate. Its pathway is cofactor biosynthesis; coenzyme A biosynthesis; CoA from (R)-pantothenate: step 4/5. Reversibly transfers an adenylyl group from ATP to 4'-phosphopantetheine, yielding dephospho-CoA (dPCoA) and pyrophosphate. The polypeptide is Phosphopantetheine adenylyltransferase (Rhodospirillum rubrum (strain ATCC 11170 / ATH 1.1.1 / DSM 467 / LMG 4362 / NCIMB 8255 / S1)).